Here is a 733-residue protein sequence, read N- to C-terminus: Polyribonucleotide nucleotidyltransferase (733 aa).

Mg(2+)-binding residues include aspartate 488 and aspartate 494. A KH domain is found at 555-614 (PRIEVMNIAVDKIRDVIGTGGKVIREIVEQTGAKINIEDDGTIRIASADAKTIEAAKRWI). In terms of domain architecture, S1 motif spans 624-692 (GVIYQGTVVK…ERGKVRLSMK (69 aa)). Positions 711 to 722 (EQEKYTEETHKS) are enriched in basic and acidic residues. Positions 711 to 733 (EQEKYTEETHKSENKRRRKKKEE) are disordered. The segment covering 723 to 733 (ENKRRRKKKEE) has biased composition (basic residues).

The protein belongs to the polyribonucleotide nucleotidyltransferase family. The cofactor is Mg(2+).

It localises to the cytoplasm. It catalyses the reaction RNA(n+1) + phosphate = RNA(n) + a ribonucleoside 5'-diphosphate. Involved in mRNA degradation. Catalyzes the phosphorolysis of single-stranded polyribonucleotides processively in the 3'- to 5'-direction. This is Polyribonucleotide nucleotidyltransferase from Bartonella henselae (strain ATCC 49882 / DSM 28221 / CCUG 30454 / Houston 1) (Rochalimaea henselae).